Consider the following 117-residue polypeptide: MTRVKRGYIARRRRTKIRLFASSFRGAHSRLTRTITQQKMRALVSAYRDRGRQKRDFRRLWITRINAVTRENEVSYSYIRLIHNLYKRQLLLNRKILAQIAILNKNCLHIISKKIIK.

The protein belongs to the bacterial ribosomal protein bL20 family.

The protein localises to the plastid. It localises to the chloroplast. Its function is as follows. Binds directly to 23S ribosomal RNA and is necessary for the in vitro assembly process of the 50S ribosomal subunit. It is not involved in the protein synthesizing functions of that subunit. The protein is Large ribosomal subunit protein bL20c of Lemna minor (Common duckweed).